Reading from the N-terminus, the 1482-residue chain is Lysine-specific demethylase rbr-2 (1482 aa).

The interval 1-45 is disordered; sequence MRGRRQEDIATTSSAPSTSTSHKKKTVSSNGSFRPRTQSNPGGKM. The span at 11–20 shows a compositional bias: low complexity; it reads TTSSAPSTST. The segment covering 30 to 41 has biased composition (polar residues); it reads NGSFRPRTQSNP. The JmjN domain maps to 61-102; it reads APVYYPTSEEFADPIEYVAKIRPDAERYGVVKIVPPSDFKPP. Residues 126–223 form the ARID domain; it reads VKEKHTFIER…HIEPFNRNLK (98 aa). A disordered region spans residues 244–316; sequence YQHHHGTMRS…SKTEEDEEEN (73 aa). The span at 251 to 264 shows a compositional bias: basic and acidic residues; that stretch reads MRSEPENTDGKNTE. Basic residues predominate over residues 277–288; it reads GRRRSKNKKPVP. The segment at 322–374 adopts a PHD-type 1 zinc-finger fold; sequence QVYCVSCNEGKDEDLLLLCDIEGCNSGRHTYCCDPVLDEVPEGEWRCPKCIES. The region spanning 471–637 is the JmjC domain; that stretch reads QYANHAWNLN…KGRECVQSYS (167 aa). 3 residues coordinate Fe cation: histidine 517, aspartate 520, and histidine 605. The segment at 1206–1260 adopts a PHD-type 2 zinc-finger fold; that stretch reads LEGCCCLGGNKSDSSESVLSCIMCESQFHVRCCEWSTFFQHLPKGCFMCVRCLRG. A disordered region spans residues 1361–1403; sequence QQRPVKSKPSASLFDPKLNSKRKRPNPSQKDSSKSKSRKRQGQ. The PHD-type 3 zinc-finger motif lies at 1416–1471; the sequence is FKSCQARSCLKPFGDSVNWVMCDAGCKNWFHVICVGFTLREINDMHEYRCSSCLDH.

The protein belongs to the JARID1 histone demethylase family. Fe(2+) is required as a cofactor.

It is found in the nucleus. It carries out the reaction N(6),N(6),N(6)-trimethyl-L-lysyl(4)-[histone H3] + 3 2-oxoglutarate + 3 O2 = L-lysyl(4)-[histone H3] + 3 formaldehyde + 3 succinate + 3 CO2. Its function is as follows. Histone demethylase that specifically demethylates 'Lys-4' of histone H3, thereby playing a central role in histone code. Does not demethylate histone H3 'Lys-9', H3 'Lys-27', H3 'Lys-36', H3 'Lys-79' or H4 'Lys-20'. Demethylates trimethylated and dimethylated but not monomethylated H3 'Lys-4'. Involved in larval development and vulva formation. This is Lysine-specific demethylase rbr-2 (rbr-2) from Caenorhabditis briggsae.